The primary structure comprises 379 residues: Succinate--CoA ligase [ADP-forming] subunit beta (379 aa).

The ATP-grasp domain occupies 9–235 (KEIAKNNGIP…GRELSEMEAI (227 aa)). ATP is bound by residues lysine 45, glutamate 91, isoleucine 94, and glutamate 99. Asparagine 191 and aspartate 205 together coordinate Mg(2+). Residues asparagine 255 and 312–314 (GIT) each bind substrate.

This sequence belongs to the succinate/malate CoA ligase beta subunit family. As to quaternary structure, heterotetramer of two alpha and two beta subunits. Requires Mg(2+) as cofactor.

The catalysed reaction is succinate + ATP + CoA = succinyl-CoA + ADP + phosphate. It carries out the reaction GTP + succinate + CoA = succinyl-CoA + GDP + phosphate. The protein operates within carbohydrate metabolism; tricarboxylic acid cycle; succinate from succinyl-CoA (ligase route): step 1/1. Functionally, succinyl-CoA synthetase functions in the citric acid cycle (TCA), coupling the hydrolysis of succinyl-CoA to the synthesis of either ATP or GTP and thus represents the only step of substrate-level phosphorylation in the TCA. The beta subunit provides nucleotide specificity of the enzyme and binds the substrate succinate, while the binding sites for coenzyme A and phosphate are found in the alpha subunit. This chain is Succinate--CoA ligase [ADP-forming] subunit beta, found in Staphylothermus marinus (strain ATCC 43588 / DSM 3639 / JCM 9404 / F1).